The primary structure comprises 126 residues: Small ribosomal subunit protein uS13 (126 aa).

The interval 96-126 (LPVRGQQTKTNARTRKGRRKGTVANKKKVSK) is disordered. Basic residues predominate over residues 107–126 (ARTRKGRRKGTVANKKKVSK).

This sequence belongs to the universal ribosomal protein uS13 family. In terms of assembly, part of the 30S ribosomal subunit. Forms a loose heterodimer with protein S19. Forms two bridges to the 50S subunit in the 70S ribosome.

Located at the top of the head of the 30S subunit, it contacts several helices of the 16S rRNA. In the 70S ribosome it contacts the 23S rRNA (bridge B1a) and protein L5 of the 50S subunit (bridge B1b), connecting the 2 subunits; these bridges are implicated in subunit movement. Contacts the tRNAs in the A and P-sites. This chain is Small ribosomal subunit protein uS13, found in Hydrogenobaculum sp. (strain Y04AAS1).